The chain runs to 689 residues: tRNA 5-methylaminomethyl-2-thiouridine biosynthesis bifunctional protein MnmC (689 aa).

The tRNA (mnm(5)s(2)U34)-methyltransferase stretch occupies residues methionine 1–proline 245. The interval isoleucine 270–arginine 689 is FAD-dependent cmnm(5)s(2)U34 oxidoreductase.

In the N-terminal section; belongs to the methyltransferase superfamily. tRNA (mnm(5)s(2)U34)-methyltransferase family. The protein in the C-terminal section; belongs to the DAO family. FAD is required as a cofactor.

The protein resides in the cytoplasm. The catalysed reaction is 5-aminomethyl-2-thiouridine(34) in tRNA + S-adenosyl-L-methionine = 5-methylaminomethyl-2-thiouridine(34) in tRNA + S-adenosyl-L-homocysteine + H(+). Catalyzes the last two steps in the biosynthesis of 5-methylaminomethyl-2-thiouridine (mnm(5)s(2)U) at the wobble position (U34) in tRNA. Catalyzes the FAD-dependent demodification of cmnm(5)s(2)U34 to nm(5)s(2)U34, followed by the transfer of a methyl group from S-adenosyl-L-methionine to nm(5)s(2)U34, to form mnm(5)s(2)U34. In Yersinia pseudotuberculosis serotype I (strain IP32953), this protein is tRNA 5-methylaminomethyl-2-thiouridine biosynthesis bifunctional protein MnmC.